The chain runs to 615 residues: Cilia- and flagella-associated protein 52 (615 aa).

WD repeat units lie at residues 54 to 98 (GHSD…LIHR), 101 to 142 (LHKV…AICG), 145 to 184 (CNTN…NKLR), 232 to 275 (GPAK…AGTK), 320 to 359 (AHND…ELLR), 362 to 401 (VPNL…IIFT), 405 to 444 (AHQK…QTLE), 449 to 488 (DHKG…RRTS), 490 to 529 (FANT…AIRI), 533 to 572 (SDLD…CYFV), and 575 to 614 (AHSG…TLAD).

The protein belongs to the CFAP52 family.

Its subcellular location is the cytoplasm. It localises to the cell projection. The protein localises to the cilium. It is found in the flagellum. May play a role in cell growth and/or survival. This chain is Cilia- and flagella-associated protein 52, found in Chlamydomonas reinhardtii (Chlamydomonas smithii).